The primary structure comprises 257 residues: Cytochrome b561 domain-containing protein At2g30890 (257 aa).

Residues 1-21 form the signal peptide; the sequence is MEIHHQLLVSLLFLLLPLCSS. The Cytochrome b561 domain maps to 22 to 219; that stretch reads QENTRSLAID…LFQDKWSYIQ (198 aa). 5 helical membrane-spanning segments follow: residues 55-75, 91-111, 125-145, 157-177, and 191-211; these read VHGF…IISI, LFFL…IGAV, HQQL…LGFL, WFVG…INIY, and ANLW…VYLF. Heme b is bound by residues histidine 56, histidine 95, histidine 125, and histidine 161. Residues 235 to 257 are disordered; sequence NISTAETGHGYEVEESKPELEKC. Positions 243 to 257 are enriched in basic and acidic residues; the sequence is HGYEVEESKPELEKC.

Heme b serves as cofactor.

Its subcellular location is the membrane. This chain is Cytochrome b561 domain-containing protein At2g30890, found in Arabidopsis thaliana (Mouse-ear cress).